The primary structure comprises 295 residues: Putative F-box protein At5g44220 (295 aa).

The F-box domain maps to 56–102; sequence STNSDLLPMDLIKEILKRLPAKTLARFLCVSKLWSSIIRSRDLMKLF.

The polypeptide is Putative F-box protein At5g44220 (Arabidopsis thaliana (Mouse-ear cress)).